A 98-amino-acid polypeptide reads, in one-letter code: Integration host factor subunit beta (98 aa).

The protein belongs to the bacterial histone-like protein family. In terms of assembly, heterodimer of an alpha and a beta chain.

This protein is one of the two subunits of integration host factor, a specific DNA-binding protein that functions in genetic recombination as well as in transcriptional and translational control. The polypeptide is Integration host factor subunit beta (Marinobacter nauticus (strain ATCC 700491 / DSM 11845 / VT8) (Marinobacter aquaeolei)).